The chain runs to 166 residues: UPF0336 protein ML2425 (166 aa).

The region spanning 10–131 (LIGKHYRQLD…VIAEVRSEVT (122 aa)) is the MaoC-like domain.

Belongs to the UPF0336 family.

The polypeptide is UPF0336 protein ML2425 (Mycobacterium leprae (strain TN)).